Here is a 296-residue protein sequence, read N- to C-terminus: Transcription repressor OFP3 (296 aa).

Disordered regions lie at residues 27-115 and 131-196; these read MSRS…SANA and PSDQ…AHSS. Positions 60–69 are enriched in polar residues; the sequence is LSSTAHHPQA. A compositionally biased stretch (basic residues) spans 78–88; the sequence is SFKRKIKRKTV. A compositionally biased stretch (low complexity) spans 92-115; the sequence is SSRLKLSTSSSLNHRSKSSSSANA. The span at 136–159 shows a compositional bias: basic and acidic residues; the sequence is FVHDPEPHSSIDIKDELSVRKLDD. An OVATE domain is found at 228-287; the sequence is IVLSSVDPEKDFRESMVEMIMENKMREQKDLEDLLACYLSLNSSEYHDVIIKAFENTWLH.

As to quaternary structure, interacts with BLH1, BLH3, KNAT5 and KNAT7.

Its subcellular location is the nucleus. Its function is as follows. Transcriptional repressor that may regulate multiple aspects of plant growth and development through the regulation of BEL1-LIKE (BLH) and KNOX TALE (KNAT) homeodomain transcription factors. The chain is Transcription repressor OFP3 (OFP3) from Arabidopsis thaliana (Mouse-ear cress).